The primary structure comprises 243 residues: Juxtaposed with another zinc finger protein 1 (243 aa).

A C2H2-type 1 zinc finger spans residues 12-37; the sequence is NTCRFGGCGLHFPTLADLIEHIEDNH. The required for interaction with NR2C2 stretch occupies residues 39–79; the sequence is DTDPRVLEKQELQQPTYVALSYINRFMTDAARREQESLKKK. Residues 89–108 show a composition bias toward polar residues; sequence SSSVSRGNVSTPPRHSSGSL. The disordered stretch occupies residues 89-151; the sequence is SSSVSRGNVS…SDSDESWTTE (63 aa). Threonine 109 and threonine 113 each carry phosphothreonine. Residues 118 to 130 show a composition bias toward low complexity; it reads PSSSFRSSTPTGS. Acidic residues predominate over residues 131 to 148; that stretch reads EYDEEEVDYEESDSDESW. The C2H2-type 2 zinc finger occupies 173–198; that stretch reads FACPVPGCKKRYKNVNGIKYHAKNGH. The C2H2-type 3; degenerate zinc finger occupies 208 to 230; it reads FKCRCGKSYKTAQGLRHHTINFH.

In terms of assembly, interacts with NR2C2 (via ligand-binding region). As to expression, highest expression in testis with moderate levels in colon, placenta, prostate and ovary and low levels in brain, spleen, liver and small intestine.

It localises to the nucleus. In terms of biological role, acts as a transcriptional corepressor of orphan nuclear receptor NR2C2. Inhibits expression of the gluconeogenesis enzyme PCK2 through inhibition of NR2C2 activity. Also involved in transcriptional activation of NAMPT by promoting expression of PPARA and PPARD. Plays a role in lipid metabolism by suppressing lipogenesis, increasing lipolysis and decreasing lipid accumulation in adipose tissue. Plays a role in glucose homeostasis by improving glucose metabolism and insulin sensitivity. The sequence is that of Juxtaposed with another zinc finger protein 1 from Homo sapiens (Human).